The sequence spans 534 residues: Bifunctional pantoate ligase/cytidylate kinase (534 aa).

Positions 1 to 302 (MRLLTTVAAL…LGSTRLIDNT (302 aa)) are pantoate--beta-alanine ligase. 48–55 (MGSLHQGH) is a binding site for ATP. The active-site Proton donor is histidine 55. Glutamine 79 is a (R)-pantoate binding site. Glutamine 79 is a beta-alanine binding site. Residue 172–175 (GQKD) coordinates ATP. Residue glutamine 178 participates in (R)-pantoate binding. ATP is bound by residues valine 201 and 209 to 212 (CSSR). The interval 303 to 534 (ILRDRQPIIA…DYYQQRLSQW (232 aa)) is cytidylate kinase.

In the N-terminal section; belongs to the pantothenate synthetase family. The protein in the C-terminal section; belongs to the cytidylate kinase family. Type 1 subfamily.

The protein localises to the cytoplasm. The enzyme catalyses (R)-pantoate + beta-alanine + ATP = (R)-pantothenate + AMP + diphosphate + H(+). It catalyses the reaction CMP + ATP = CDP + ADP. The catalysed reaction is dCMP + ATP = dCDP + ADP. It participates in cofactor biosynthesis; (R)-pantothenate biosynthesis; (R)-pantothenate from (R)-pantoate and beta-alanine: step 1/1. Functionally, catalyzes the condensation of pantoate with beta-alanine in an ATP-dependent reaction via a pantoyl-adenylate intermediate. In terms of biological role, catalyzes the transfer of a phosphate group from ATP to either CMP or dCMP to form CDP or dCDP and ADP, respectively. The protein is Bifunctional pantoate ligase/cytidylate kinase of Nostoc sp. (strain PCC 7120 / SAG 25.82 / UTEX 2576).